A 177-amino-acid chain; its full sequence is Large ribosomal subunit protein uL6 (177 aa).

Belongs to the universal ribosomal protein uL6 family. As to quaternary structure, part of the 50S ribosomal subunit.

In terms of biological role, this protein binds to the 23S rRNA, and is important in its secondary structure. It is located near the subunit interface in the base of the L7/L12 stalk, and near the tRNA binding site of the peptidyltransferase center. In Rhizobium meliloti (strain 1021) (Ensifer meliloti), this protein is Large ribosomal subunit protein uL6.